A 585-amino-acid polypeptide reads, in one-letter code: Beta-(1--&gt;2)glucan export ATP-binding/permease protein NdvA (585 aa).

The region spanning 21-301 (VGAIVIANIV…MKAFATQIFE (281 aa)) is the ABC transmembrane type-1 domain. The next 6 membrane-spanning stretches (helical) occupy residues 22–42 (GAIV…PILF), 55–75 (VAPM…AFVL), 136–156 (QHLA…AMDV), 158–178 (LSLI…VVMS), 245–265 (LNRI…TVLV), and 269–289 (ELGV…IGRL). In terms of domain architecture, ABC transporter spans 335–569 (VEFRDISFDF…NGRFAALLRA (235 aa)). 368-375 (GPTGAGKT) is an ATP binding site.

It belongs to the ABC transporter superfamily. Beta-(1--&gt;2)glucan exporter (TC 3.A.1.108.1) family. In terms of assembly, homodimer.

Its subcellular location is the cell inner membrane. It catalyses the reaction [(1-&gt;2)-beta-D-glucosyl](n)(in) + ATP + H2O = [(1-&gt;2)-beta-D-glucosyl](n)(out) + ADP + phosphate + H(+). Its function is as follows. Involved in beta-(1--&gt;2)glucan export which is required for nodulation of legume roots. May be involved in other classes of oligosaccharides export. Transmembrane domains (TMD) form a pore in the inner membrane and the ATP-binding domain (NBD) is responsible for energy generation. In Rhizobium meliloti (strain 1021) (Ensifer meliloti), this protein is Beta-(1--&gt;2)glucan export ATP-binding/permease protein NdvA.